The following is a 110-amino-acid chain: MKLKKKFLEKSKKIAEERIDVLMNLAEKESKAGKIDRSKNYVLLGKKIAMRMRMPYPKEWKRRICKNCGSFLIYGKNARVRTKAKNYPHVVITCLECNSITRIPIKSEKK.

Positions 65, 68, 94, and 97 each coordinate Zn(2+).

Belongs to the eukaryotic/archaeal RNase P protein component 4 family. Consists of a catalytic RNA component and at least 4-5 protein subunits. Zn(2+) serves as cofactor.

Its subcellular location is the cytoplasm. It catalyses the reaction Endonucleolytic cleavage of RNA, removing 5'-extranucleotides from tRNA precursor.. Its function is as follows. Part of ribonuclease P, a protein complex that generates mature tRNA molecules by cleaving their 5'-ends. The sequence is that of Ribonuclease P protein component 4 from Methanococcus maripaludis (strain C5 / ATCC BAA-1333).